Consider the following 94-residue polypeptide: Large ribosomal subunit protein bL25 (94 aa).

It belongs to the bacterial ribosomal protein bL25 family. Part of the 50S ribosomal subunit; part of the 5S rRNA/L5/L18/L25 subcomplex. Contacts the 5S rRNA. Binds to the 5S rRNA independently of L5 and L18.

Its function is as follows. This is one of the proteins that binds to the 5S RNA in the ribosome where it forms part of the central protuberance. The protein is Large ribosomal subunit protein bL25 of Proteus mirabilis (strain HI4320).